A 130-amino-acid chain; its full sequence is Small ribosomal subunit protein uS11c (130 aa).

It belongs to the universal ribosomal protein uS11 family. Part of the 30S ribosomal subunit.

It localises to the plastid. The protein localises to the chloroplast. The protein is Small ribosomal subunit protein uS11c of Oedogonium cardiacum (Filamentous green alga).